Here is an 80-residue protein sequence, read N- to C-terminus: Conotoxin Bt6.5 (80 aa).

An N-terminal signal peptide occupies residues 1–22 (MKLTCVLIIAVLFLTACQLATA). Residues 23-45 (KTYSTGRQKHRALRSTDKNIKLS) constitute a propeptide that is removed on maturation. 3 disulfide bridges follow: Cys48–Cys62, Cys55–Cys66, and Cys61–Cys73.

Belongs to the conotoxin O1 superfamily. In terms of tissue distribution, expressed by the venom duct.

The protein localises to the secreted. Its function is as follows. When injected intracranially in mice, induces a series of symptoms such as quivering, climbing, scratching, barrel rolling and paralysis of limbs. Unexpectedly, no effect is observed on ionic currents when tested on locust DUM neuron. In Conus betulinus (Beech cone), this protein is Conotoxin Bt6.5.